A 380-amino-acid chain; its full sequence is Ceramide synthase 2 (380 aa).

Residues Met1 to Tyr40 are Lumenal-facing. Asn19 is a glycosylation site (N-linked (GlcNAc...) asparagine). Residues Ile41 to Ala61 form a helical membrane-spanning segment. The interval Leu67–Ser128 is homeobox-like. The TLC domain occupies Lys131–Thr332. Transmembrane regions (helical) follow at residues Phe140–Phe160, Trp181–Val201, Gln209–Val229, and Ile264–Ile284. Residues Tyr291–Phe300 carry the Last loop motif motif. A helical transmembrane segment spans residues Phe304–Leu324. Residues Arg325–Asp380 lie on the Cytoplasmic side of the membrane. The tract at residues Asp338–Asp380 is disordered. Residue Ser341 is modified to Phosphoserine. Acidic residues predominate over residues Glu344–Glu353. Thr346 carries the post-translational modification Phosphothreonine. A phosphoserine mark is found at Ser348 and Ser349.

As to quaternary structure, interacts with ATP6V0C, ASGR1, ASGR2 and SLC22A1/OCT1. Interacts with ELOV1, HSD17B12 and TECR. Interacts with NDUFS2. Acetylated. Deacetylation by SIRT3 increases enzyme activity and promotes mitochondrial ceramide accumulation. Post-translationally, phosphorylated at the C-terminus by CK2, leading to increase the ceramide synthase activity.

It localises to the endoplasmic reticulum membrane. The enzyme catalyses a very long-chain fatty acyl-CoA + a sphingoid base = an N-(very-long-chain fatty acyl)-sphingoid base + CoA + H(+). The catalysed reaction is docosanoyl-CoA + sphinganine = N-docosanoylsphinganine + CoA + H(+). It carries out the reaction tetracosanoyl-CoA + sphinganine = N-tetracosanoylsphinganine + CoA + H(+). It catalyses the reaction hexacosanoyl-CoA + sphinganine = N-hexacosanoylsphinganine + CoA + H(+). The enzyme catalyses (15Z)-tetracosenoyl-CoA + sphinganine = N-(15Z-tetracosenoyl)-sphinganine + CoA + H(+). The catalysed reaction is 2-hydroxytetracosanoyl-CoA + sphinganine = N-(2-hydroxytetracosanoyl)-sphinganine + CoA + H(+). It carries out the reaction 2-hydroxydocosanoyl-CoA + sphinganine = N-(2-hydroxydocosanoyl)-sphinganine + CoA + H(+). It catalyses the reaction 2-hydroxytetracosenoyl-CoA + sphinganine = N-(2-hydroxytetracosenoyl)-sphinganine + CoA + H(+). The enzyme catalyses tetracosenoyl-CoA + sphinganine = an N-tetracosenoylsphinganine + CoA + H(+). The catalysed reaction is hexacosenoyl-CoA + sphinganine = N-hexacosenoylsphinganine + CoA + H(+). It carries out the reaction tetracosanoyl-CoA + sphing-4-enine = N-tetracosanoyl-sphing-4-enine + CoA + H(+). It catalyses the reaction tetracosenoyl-CoA + sphing-4-enine = N-(tetracosenoyl)-sphing-4-enine + CoA + H(+). The enzyme catalyses heptadecasphing-4-enine + tetracosanoyl-CoA = N-tetracosanoyl-heptadecasphing-4-enine + CoA + H(+). The catalysed reaction is a fatty acyl-CoA + sphing-4-enine = an N-acylsphing-4-enine + CoA + H(+). It carries out the reaction sphing-4-enine + hexadecanoyl-CoA = N-hexadecanoylsphing-4-enine + CoA + H(+). It catalyses the reaction sphing-4-enine + octadecanoyl-CoA = N-octadecanoylsphing-4-enine + CoA + H(+). The enzyme catalyses eicosanoyl-CoA + sphing-4-enine = N-eicosanoyl-sphing-4-enine + CoA + H(+). The catalysed reaction is sphinganine + hexadecanoyl-CoA = N-hexadecanoylsphinganine + CoA + H(+). It carries out the reaction sphinganine + octadecanoyl-CoA = N-(octadecanoyl)-sphinganine + CoA + H(+). It catalyses the reaction sphinganine + (9Z)-octadecenoyl-CoA = N-(9Z-octadecenoyl)-sphinganine + CoA + H(+). The enzyme catalyses eicosanoyl-CoA + sphinganine = N-eicosanoylsphinganine + CoA + H(+). It participates in lipid metabolism; sphingolipid metabolism. With respect to regulation, ceramide synthase activity is inhibited by sphingosine-1-phosphate. Its function is as follows. Ceramide synthase that catalyzes the transfer of the acyl chain from acyl-CoA to a sphingoid base, with high selectivity toward very-long-chain fatty acyl-CoA (chain length C22-C27). N-acylates sphinganine and sphingosine bases to form dihydroceramides and ceramides in de novo synthesis and salvage pathways, respectively. Plays a non-redundant role in the synthesis of ceramides with very-long-chain fatty acids in kidney, liver and brain. Regulates the abundance of myelin-specific sphingolipids galactosylceramide and sulfatide that affects myelin sheath architecture and motor neuron functions. The sequence is that of Ceramide synthase 2 from Bos taurus (Bovine).